The following is a 240-amino-acid chain: Purine nucleoside phosphorylase RC0672 (240 aa).

3 residues coordinate Zn(2+): His60, Cys96, and His113.

It belongs to the purine nucleoside phosphorylase YfiH/LACC1 family. In terms of assembly, homodimer. Requires Cu(2+) as cofactor. It depends on Zn(2+) as a cofactor.

The enzyme catalyses adenosine + phosphate = alpha-D-ribose 1-phosphate + adenine. The catalysed reaction is S-methyl-5'-thioadenosine + phosphate = 5-(methylsulfanyl)-alpha-D-ribose 1-phosphate + adenine. It carries out the reaction inosine + phosphate = alpha-D-ribose 1-phosphate + hypoxanthine. It catalyses the reaction adenosine + H2O + H(+) = inosine + NH4(+). Functionally, purine nucleoside enzyme that catalyzes the phosphorolysis of adenosine and inosine nucleosides, yielding D-ribose 1-phosphate and the respective free bases, adenine and hypoxanthine. Also catalyzes the phosphorolysis of S-methyl-5'-thioadenosine into adenine and S-methyl-5-thio-alpha-D-ribose 1-phosphate. Also has adenosine deaminase activity. This Rickettsia conorii (strain ATCC VR-613 / Malish 7) protein is Purine nucleoside phosphorylase RC0672.